The sequence spans 389 residues: Phospho-N-acetylmuramoyl-pentapeptide-transferase (389 aa).

A run of 11 helical transmembrane segments spans residues 25 to 45, 74 to 94, 97 to 117, 134 to 154, 167 to 187, 190 to 210, 222 to 242, 259 to 279, 286 to 306, 311 to 331, and 366 to 386; these read RAVM…PWVI, MGGV…CDWG, FIWV…VDDY, FFWQ…SVSE, WIEG…VPFF, VSYP…IVGS, GLVI…AYVM, AGEL…FLWF, VFMG…VAVI, IVLF…MLQV, and QVTV…LSSL.

It belongs to the glycosyltransferase 4 family. MraY subfamily. Mg(2+) is required as a cofactor.

Its subcellular location is the cell inner membrane. The enzyme catalyses UDP-N-acetyl-alpha-D-muramoyl-L-alanyl-gamma-D-glutamyl-meso-2,6-diaminopimeloyl-D-alanyl-D-alanine + di-trans,octa-cis-undecaprenyl phosphate = di-trans,octa-cis-undecaprenyl diphospho-N-acetyl-alpha-D-muramoyl-L-alanyl-D-glutamyl-meso-2,6-diaminopimeloyl-D-alanyl-D-alanine + UMP. The protein operates within cell wall biogenesis; peptidoglycan biosynthesis. Functionally, catalyzes the initial step of the lipid cycle reactions in the biosynthesis of the cell wall peptidoglycan: transfers peptidoglycan precursor phospho-MurNAc-pentapeptide from UDP-MurNAc-pentapeptide onto the lipid carrier undecaprenyl phosphate, yielding undecaprenyl-pyrophosphoryl-MurNAc-pentapeptide, known as lipid I. This Cupriavidus metallidurans (strain ATCC 43123 / DSM 2839 / NBRC 102507 / CH34) (Ralstonia metallidurans) protein is Phospho-N-acetylmuramoyl-pentapeptide-transferase.